Here is a 332-residue protein sequence, read N- to C-terminus: L-lactate dehydrogenase A chain (332 aa).

Residues 29-57 and R99 each bind NAD(+); that span reads GAVG…VEDK. R106, N138, and R169 together coordinate substrate. N138 contributes to the NAD(+) binding site. Residue H193 is the Proton acceptor of the active site. T248 provides a ligand contact to substrate.

It belongs to the LDH/MDH superfamily. LDH family. Homotetramer.

It is found in the cytoplasm. It carries out the reaction (S)-lactate + NAD(+) = pyruvate + NADH + H(+). Its pathway is fermentation; pyruvate fermentation to lactate; (S)-lactate from pyruvate: step 1/1. Functionally, interconverts simultaneously and stereospecifically pyruvate and lactate with concomitant interconversion of NADH and NAD(+). This Gallus gallus (Chicken) protein is L-lactate dehydrogenase A chain (LDHA).